The following is a 161-amino-acid chain: Beta-lactoglobulin-2 (161 aa).

Cystine bridges form between C66–C159 and C106–C119.

This sequence belongs to the calycin superfamily. Lipocalin family. As to quaternary structure, monomer. As to expression, synthesized in mammary gland and secreted in milk.

It localises to the secreted. Functionally, primary component of whey, it binds retinol and is probably involved in the transport of that molecule. In Canis lupus familiaris (Dog), this protein is Beta-lactoglobulin-2 (LGB2).